The sequence spans 276 residues: Chlorophyll a-b binding protein CP29.3, chloroplastic (276 aa).

Residues 1–29 constitute a chloroplast transit peptide; sequence MATTTAAAASGIFGIRIQDPRPGTGRVQA. Positions 1–53 are disordered; it reads MATTTAAAASGIFGIRIQDPRPGTGRVQARFGFSFGKKKPAPPPKKSRQVQDD. Residues 36-48 are compositionally biased toward basic residues; it reads GKKKPAPPPKKSR. Tryptophan 59 is a binding site for chlorophyll b. Chlorophyll a-binding residues include phenylalanine 79, glutamate 141, and histidine 144. A helical membrane pass occupies residues 147 to 167; sequence WAMLGTLGAIAVEALTGIAWQ. Leucine 181 is a binding site for chlorophyll a. The chain crosses the membrane as a helical span at residues 185 to 205; sequence LPFSLTTLIWIEVLVVGYIEF. Chlorophyll b is bound by residues glutamate 204 and arginine 207. Residues glutamate 242, histidine 245, arginine 247, and glutamine 259 each coordinate chlorophyll a. Residues 248–268 traverse the membrane as a helical segment; sequence LAMVAFLIFALQAAFTGKGPV.

It belongs to the light-harvesting chlorophyll a/b-binding (LHC) protein family. In terms of assembly, the LHC complex consists of chlorophyll a-b binding proteins. Requires Binds at least 14 chlorophylls (8 Chl-a and 6 Chl-b) and carotenoids such as lutein and neoxanthin. as cofactor. In terms of processing, photoregulated by reversible phosphorylation of its threonine residues.

The protein localises to the plastid. The protein resides in the chloroplast thylakoid membrane. Functionally, the light-harvesting complex (LHC) functions as a light receptor, it captures and delivers excitation energy to photosystems with which it is closely associated. The polypeptide is Chlorophyll a-b binding protein CP29.3, chloroplastic (LHCB4.3) (Arabidopsis thaliana (Mouse-ear cress)).